A 289-amino-acid chain; its full sequence is Glycine--tRNA ligase alpha subunit (289 aa).

The protein belongs to the class-II aminoacyl-tRNA synthetase family. In terms of assembly, tetramer of two alpha and two beta subunits.

The protein resides in the cytoplasm. It carries out the reaction tRNA(Gly) + glycine + ATP = glycyl-tRNA(Gly) + AMP + diphosphate. This is Glycine--tRNA ligase alpha subunit from Nitratidesulfovibrio vulgaris (strain ATCC 29579 / DSM 644 / CCUG 34227 / NCIMB 8303 / VKM B-1760 / Hildenborough) (Desulfovibrio vulgaris).